Consider the following 346-residue polypeptide: GTPase Obg (346 aa).

Residues 1–159 form the Obg domain; sequence MRFVDRCRLK…RELRLELKVL (159 aa). Positions 122–147 are disordered; it reads KGGRGNLHFKSPHDRAPRRAEPGEPG. Residues 132-147 are compositionally biased toward basic and acidic residues; sequence SPHDRAPRRAEPGEPG. The 177-residue stretch at 160–336 folds into the OBG-type G domain; that stretch reads ADVGLLGFPN…LVRELAALAR (177 aa). GTP-binding positions include 166–173, 191–195, 218–221, 288–291, and 317–319; these read GFPNAGKS, FTTLT, DIPG, TKAD, and SAA. Residues serine 173 and threonine 193 each coordinate Mg(2+).

It belongs to the TRAFAC class OBG-HflX-like GTPase superfamily. OBG GTPase family. As to quaternary structure, monomer. Mg(2+) is required as a cofactor.

The protein resides in the cytoplasm. In terms of biological role, an essential GTPase which binds GTP, GDP and possibly (p)ppGpp with moderate affinity, with high nucleotide exchange rates and a fairly low GTP hydrolysis rate. Plays a role in control of the cell cycle, stress response, ribosome biogenesis and in those bacteria that undergo differentiation, in morphogenesis control. The protein is GTPase Obg of Sorangium cellulosum (strain So ce56) (Polyangium cellulosum (strain So ce56)).